The following is a 50-amino-acid chain: Mast cell degranulating peptide (50 aa).

The signal sequence occupies residues 1 to 27; the sequence is MISMLRCTFFFVSVILITSYFVTPTMS. K29 carries the post-translational modification N6-formyllysine. The cysteines at positions 30 and 42 are disulfide-linked. K44 and K48 each carry N6-formyllysine. N49 carries the post-translational modification Asparagine amide.

As to expression, expressed by the venom gland.

Its subcellular location is the secreted. In terms of biological role, potent anti-inflammatory agent. At low concentrations, mediates the degranulation of mast cells thus evoking an inflammatory response. Also acts as a neurotoxin capable of blocking a class of voltage-gated potassium channels. This Apis cerana cerana (Oriental honeybee) protein is Mast cell degranulating peptide.